The chain runs to 160 residues: MTKKKVKPGSNTIALNKRARHDYFIEEELEAGLSLQGWEVKSMRAGKANISDSYIIFRDGEAYLFGATIQPLTVASTHVVCDPTRTRKLLLNQRELASLFGKANRDGYTIVALSLYWKNAWAKIKIGLAKGKQQHDKRNDIKDREWKMQKERIMKNANRG.

This sequence belongs to the SmpB family.

Its subcellular location is the cytoplasm. Its function is as follows. Required for rescue of stalled ribosomes mediated by trans-translation. Binds to transfer-messenger RNA (tmRNA), required for stable association of tmRNA with ribosomes. tmRNA and SmpB together mimic tRNA shape, replacing the anticodon stem-loop with SmpB. tmRNA is encoded by the ssrA gene; the 2 termini fold to resemble tRNA(Ala) and it encodes a 'tag peptide', a short internal open reading frame. During trans-translation Ala-aminoacylated tmRNA acts like a tRNA, entering the A-site of stalled ribosomes, displacing the stalled mRNA. The ribosome then switches to translate the ORF on the tmRNA; the nascent peptide is terminated with the 'tag peptide' encoded by the tmRNA and targeted for degradation. The ribosome is freed to recommence translation, which seems to be the essential function of trans-translation. This Mannheimia succiniciproducens (strain KCTC 0769BP / MBEL55E) protein is SsrA-binding protein.